The sequence spans 97 residues: Large ribosomal subunit protein eL21 (97 aa).

Residues 1–24 form a disordered region; the sequence is MQKSEGFRSKTRYKLQKHPRQKGM. The segment covering 9–21 has biased composition (basic residues); sequence SKTRYKLQKHPRQ.

Belongs to the eukaryotic ribosomal protein eL21 family.

This Methanococcus maripaludis (strain DSM 14266 / JCM 13030 / NBRC 101832 / S2 / LL) protein is Large ribosomal subunit protein eL21.